A 264-amino-acid chain; its full sequence is Undecaprenyl-diphosphatase (264 aa).

6 consecutive transmembrane segments (helical) span residues 41 to 61 (NLAF…VILW), 82 to 102 (YVIN…FFKD), 106 to 126 (AIFG…AALL), 140 to 160 (ISMK…LPGL), 213 to 233 (IPAL…CLAC), and 244 to 264 (KLIY…ITQL).

This sequence belongs to the UppP family.

Its subcellular location is the cell inner membrane. The enzyme catalyses di-trans,octa-cis-undecaprenyl diphosphate + H2O = di-trans,octa-cis-undecaprenyl phosphate + phosphate + H(+). Catalyzes the dephosphorylation of undecaprenyl diphosphate (UPP). Confers resistance to bacitracin. The protein is Undecaprenyl-diphosphatase of Bacteroides thetaiotaomicron (strain ATCC 29148 / DSM 2079 / JCM 5827 / CCUG 10774 / NCTC 10582 / VPI-5482 / E50).